A 424-amino-acid chain; its full sequence is Riboflavin biosynthesis protein RibBA (424 aa).

The DHBP synthase stretch occupies residues methionine 1–threonine 206. D-ribulose 5-phosphate is bound by residues arginine 32–glutamate 33, aspartate 37, arginine 145–threonine 149, and glutamate 169. Glutamate 33 is a Mg(2+) binding site. Histidine 148 contributes to the Mg(2+) binding site. A GTP cyclohydrolase II region spans residues phenylalanine 207 to cysteine 424. Arginine 257–glutamate 261 lines the GTP pocket. Zn(2+) contacts are provided by cysteine 262, cysteine 273, and cysteine 275. GTP contacts are provided by residues glutamine 278, glutamate 301 to arginine 303, and threonine 323. The active-site Proton acceptor; for GTP cyclohydrolase activity is the aspartate 335. Arginine 337 (nucleophile; for GTP cyclohydrolase activity) is an active-site residue. 2 residues coordinate GTP: threonine 358 and lysine 363.

The protein in the N-terminal section; belongs to the DHBP synthase family. This sequence in the C-terminal section; belongs to the GTP cyclohydrolase II family. Requires Mg(2+) as cofactor. It depends on Mn(2+) as a cofactor. Zn(2+) is required as a cofactor.

The enzyme catalyses D-ribulose 5-phosphate = (2S)-2-hydroxy-3-oxobutyl phosphate + formate + H(+). The catalysed reaction is GTP + 4 H2O = 2,5-diamino-6-hydroxy-4-(5-phosphoribosylamino)-pyrimidine + formate + 2 phosphate + 3 H(+). It participates in cofactor biosynthesis; riboflavin biosynthesis; 2-hydroxy-3-oxobutyl phosphate from D-ribulose 5-phosphate: step 1/1. Its pathway is cofactor biosynthesis; riboflavin biosynthesis; 5-amino-6-(D-ribitylamino)uracil from GTP: step 1/4. Its function is as follows. Catalyzes the conversion of D-ribulose 5-phosphate to formate and 3,4-dihydroxy-2-butanone 4-phosphate. In terms of biological role, catalyzes the conversion of GTP to 2,5-diamino-6-ribosylamino-4(3H)-pyrimidinone 5'-phosphate (DARP), formate and pyrophosphate. This chain is Riboflavin biosynthesis protein RibBA, found in Chlamydia muridarum (strain MoPn / Nigg).